We begin with the raw amino-acid sequence, 342 residues long: Spore photoproduct lyase (342 aa).

The Radical SAM core domain maps to 77–305; sequence SKPSAEYAIP…EEKRRYKWGR (229 aa). [4Fe-4S] cluster-binding residues include C91, C95, and C98. A DNA-binding region (H-T-H motif) is located at residues 218-235; sequence EAAVKVAKAGYPLGFIVA.

This sequence belongs to the radical SAM superfamily. SPL family. In terms of assembly, monomer or homodimer. Requires [4Fe-4S] cluster as cofactor. The cofactor is S-adenosyl-L-methionine.

It catalyses the reaction (5R)-5,6-dihydro-5-(thymidin-7-yl)thymidine in DNA = a thymidine dimer in DNA. Its function is as follows. Involved in repair of UV radiation-induced DNA damage during spore germination. Can repair thymine dimer 5-thyminyl-5,6-dihydrothymine (known as spore photoproduct (SP)) by in situ monomerization of SP to two thymines. The polypeptide is Spore photoproduct lyase (splB) (Bacillus subtilis (strain 168)).